The following is a 212-amino-acid chain: Protein GET1 (212 aa).

At 1–4 the chain is on the lumenal side; it reads MASL. A helical membrane pass occupies residues 5–24; it reads LLFVLVIQIITYLINTIGAR. At 25 to 110 the chain is on the cytoplasmic side; the sequence is TIDSLLWLLY…SFDWTIKTVR (86 aa). A coiled-coil region spans residues 75 to 99; that stretch reads AKLRRRHDKAMEEYDVKNKKLSALK. Residues 111-131 form a helical membrane-spanning segment; that stretch reads WVSTTGVTVILQFWFSKSPIF. The Lumenal portion of the chain corresponds to 132–155; the sequence is DLPRGWLPWQVEWILSFPRAPLGT. Residues 156–172 traverse the membrane as a helical segment; that stretch reads VSIQVWGGACGTVIALV. The Cytoplasmic segment spans residues 173-212; it reads GGAMGVAAPAFKKINQPRGEAQKMGTPRGSREQTPVRKTQ. The interval 189-212 is disordered; it reads PRGEAQKMGTPRGSREQTPVRKTQ. The segment covering 201-212 has biased composition (basic and acidic residues); sequence GSREQTPVRKTQ.

It belongs to the WRB/GET1 family. In terms of assembly, interacts with GET3.

It localises to the endoplasmic reticulum membrane. In terms of biological role, required for the post-translational delivery of tail-anchored (TA) proteins to the endoplasmic reticulum. Acts as a membrane receptor for soluble GET3, which recognizes and selectively binds the transmembrane domain of TA proteins in the cytosol. The sequence is that of Protein GET1 from Arthroderma otae (strain ATCC MYA-4605 / CBS 113480) (Microsporum canis).